A 424-amino-acid polypeptide reads, in one-letter code: SNF1-related protein kinase regulatory subunit gamma-1 (424 aa).

Position 2 is an N-acetylalanine (Ala-2). Ser-44 carries the phosphoserine modification. 4 CBS domains span residues 63–131 (LSSD…EPPS), 185–244 (TFRW…CAGL), 263–324 (MSKD…YHDY), and 350–408 (IMSG…SGYF).

It belongs to the 5'-AMP-activated protein kinase gamma subunit family. Subunit of a probable heterotrimeric complex consisting of an alpha catalytic (KIN10 or KIN11) subunit, and a beta (KINB) and a gamma (KING or SNF4) non-catalytic regulatory subunits. Interacts with HXK1 in mitochondrion. In terms of processing, sumoylated by SIZ1. In terms of tissue distribution, expressed in vegetative organs and, to lower extent, in reproductive organs.

It localises to the mitochondrion. In terms of biological role, regulatory subunit of the probable trimeric SNF1-related protein kinase (SnRK) complex, which may play a role in a signal transduction cascade regulating gene expression and carbohydrate metabolism in higher plants. The SnRK complex may also be involved in the regulation of fatty acid synthesis by phosphorylation of acetyl-CoA carboxylase and in assimilation of nitrogen by phosphorylating nitrate reductase. This is SNF1-related protein kinase regulatory subunit gamma-1 (KING1) from Arabidopsis thaliana (Mouse-ear cress).